The sequence spans 427 residues: Glucose-1-phosphate adenylyltransferase (427 aa).

Residues tyrosine 112, glycine 177, 192-193 (EK), and serine 210 contribute to the alpha-D-glucose 1-phosphate site.

This sequence belongs to the bacterial/plant glucose-1-phosphate adenylyltransferase family. As to quaternary structure, homotetramer.

The enzyme catalyses alpha-D-glucose 1-phosphate + ATP + H(+) = ADP-alpha-D-glucose + diphosphate. Its pathway is glycan biosynthesis; glycogen biosynthesis. Involved in the biosynthesis of ADP-glucose, a building block required for the elongation reactions to produce glycogen. Catalyzes the reaction between ATP and alpha-D-glucose 1-phosphate (G1P) to produce pyrophosphate and ADP-Glc. The protein is Glucose-1-phosphate adenylyltransferase of Methylobacillus flagellatus (strain ATCC 51484 / DSM 6875 / VKM B-1610 / KT).